We begin with the raw amino-acid sequence, 396 residues long: Argininosuccinate synthase (396 aa).

9–17 contributes to the ATP binding site; it reads AYSGGLDTS. Y85 provides a ligand contact to L-citrulline. G115 contributes to the ATP binding site. 3 residues coordinate L-aspartate: T117, N121, and D122. Residue N121 coordinates L-citrulline. The L-citrulline site is built by R125, S173, E258, and Y270.

It belongs to the argininosuccinate synthase family. Type 1 subfamily. As to quaternary structure, homotetramer.

The protein resides in the cytoplasm. The enzyme catalyses L-citrulline + L-aspartate + ATP = 2-(N(omega)-L-arginino)succinate + AMP + diphosphate + H(+). The protein operates within amino-acid biosynthesis; L-arginine biosynthesis; L-arginine from L-ornithine and carbamoyl phosphate: step 2/3. The sequence is that of Argininosuccinate synthase from Streptococcus mutans serotype c (strain ATCC 700610 / UA159).